The following is a 139-amino-acid chain: uncharacterized protein (139 aa).

Transmembrane regions (helical) follow at residues tyrosine 38–phenylalanine 60, phenylalanine 72–serine 94, and isoleucine 114–alanine 136.

The protein resides in the cell membrane. This is an uncharacterized protein from Treponema pallidum (strain Nichols).